A 1021-amino-acid polypeptide reads, in one-letter code: Nonribosomal peptide synthetase asaC (1021 aa).

Residues 17-418 (RHHVRTSPNA…ARADNMVKIR (402 aa)) form an adenylation (A) domain region. In terms of domain architecture, Carrier spans 528 to 603 (KDAGDSVTWL…GLASVIDAGH (76 aa)). Ser563 bears the O-(pantetheine 4'-phosphoryl)serine mark. Positions 646-888 (LTGATGFLGT…MIPVDFITTA (243 aa)) are short-chain dehydrogenase/reductase (R) domain.

The protein belongs to the NRP synthetase family.

It functions in the pathway secondary metabolite biosynthesis. Nonribosomal peptide synthetase; part of the gene cluster that mediates the biosynthesis of aspergillic acid, a hydroxamic acid-containing pyrazinone with aliphatic side chains that originates from leucine (Leu) and isoleucine (Ile). Aspergillic acid has antibiotic properties and was shown to be lethal to mice. The first step in the pathway is the production of deoxyaspergillic acid via a condensation between the Ile amine and the Leu carboxylic acid, followed by a reductive release from the protein forming the dipeptide aldehyde NH(2)-Leu-Ile-CHO, which could undergo an intermolecular cyclization resulting in a dihydropyrazinone. As the NRPS asaC lacks a condensation domain, it is improbable that it is responsible for condensation of Leu and Ile. One possibility is that asaC acts on a previously condensed dipeptide and functions as a Leu-Ile reductase to yield deoxyaspergillic acid. After asaC forms deoxyaspergillic acid, the cytochrome P450 asaD oxidizes the pyrazinone to the hydroxamic acid-containing bioactive metabolite aspergillic acid. The hydroxylase/desaturase asaB can then convert aspergillic acid to hydroxyaspergillic acid. Both aspergillic acid and hydroxyaspergillic acid can form complexes with iron producing ferriaspergillin analogs. This chain is Nonribosomal peptide synthetase asaC, found in Aspergillus flavus (strain ATCC 200026 / FGSC A1120 / IAM 13836 / NRRL 3357 / JCM 12722 / SRRC 167).